A 336-amino-acid chain; its full sequence is Phospho-N-acetylmuramoyl-pentapeptide-transferase (336 aa).

A run of 10 helical transmembrane segments spans residues 3–23 (LTLI…PYFI), 53–73 (GGTV…LFSI), 78–98 (SLAL…IGFL), 118–138 (LALQ…PSGI), 143–163 (VFGY…FWVV), 174–194 (GIDG…GVIA), 200–220 (FDVL…FCFN), 226–246 (VFMG…ISIA), 251–271 (WTLL…MLQV), and 316–336 (AFLW…LYVF).

Belongs to the glycosyltransferase 4 family. MraY subfamily. Mg(2+) is required as a cofactor.

The protein resides in the cell membrane. It carries out the reaction UDP-N-acetyl-alpha-D-muramoyl-L-alanyl-gamma-D-glutamyl-L-lysyl-D-alanyl-D-alanine + di-trans,octa-cis-undecaprenyl phosphate = Mur2Ac(oyl-L-Ala-gamma-D-Glu-L-Lys-D-Ala-D-Ala)-di-trans,octa-cis-undecaprenyl diphosphate + UMP. The protein operates within cell wall biogenesis; peptidoglycan biosynthesis. Functionally, catalyzes the initial step of the lipid cycle reactions in the biosynthesis of the cell wall peptidoglycan: transfers peptidoglycan precursor phospho-MurNAc-pentapeptide from UDP-MurNAc-pentapeptide onto the lipid carrier undecaprenyl phosphate, yielding undecaprenyl-pyrophosphoryl-MurNAc-pentapeptide, known as lipid I. The protein is Phospho-N-acetylmuramoyl-pentapeptide-transferase of Streptococcus pyogenes serotype M5 (strain Manfredo).